A 416-amino-acid polypeptide reads, in one-letter code: Glutamyl-tRNA reductase (416 aa).

Substrate is bound by residues T48–R51, S104, E109–Q111, and Q115. C49 serves as the catalytic Nucleophile. G184 to I189 contributes to the NADP(+) binding site.

This sequence belongs to the glutamyl-tRNA reductase family. In terms of assembly, homodimer.

The catalysed reaction is (S)-4-amino-5-oxopentanoate + tRNA(Glu) + NADP(+) = L-glutamyl-tRNA(Glu) + NADPH + H(+). It functions in the pathway porphyrin-containing compound metabolism; protoporphyrin-IX biosynthesis; 5-aminolevulinate from L-glutamyl-tRNA(Glu): step 1/2. Functionally, catalyzes the NADPH-dependent reduction of glutamyl-tRNA(Glu) to glutamate 1-semialdehyde (GSA). This chain is Glutamyl-tRNA reductase, found in Dechloromonas aromatica (strain RCB).